Here is a 133-residue protein sequence, read N- to C-terminus: Helix-loop-helix protein 1 (133 aa).

The segment at 1–78 (MMLNSDTMEL…RRRATAKYRT (78 aa)) is disordered. Over residues 25-39 (DCGGGPGPDGAGSGD) the composition is skewed to gly residues. A compositionally biased stretch (basic and acidic residues) spans 52–65 (ESGRKDLQHLSREE). Basic residues predominate over residues 66-78 (RRRRRRATAKYRT). The bHLH domain maps to 75–127 (KYRTAHATRERIRVEAFNLAFAELRKLLPTLPPDKKLSKIEILRLAICYISYL).

In terms of assembly, efficient DNA binding requires dimerization with another bHLH protein.

The protein localises to the nucleus. Its function is as follows. May serve as DNA-binding protein and may be involved in the control of cell-type determination, possibly within the developing nervous system. This Mus musculus (Mouse) protein is Helix-loop-helix protein 1 (Nhlh1).